Here is a 174-residue protein sequence, read N- to C-terminus: MESSSSLLHHSYLSYLNPKFGKRPLVSYPLMQSSRKCKQTRICSNKMYVPGFGEASPEAKAAKHLHDFFTYVAVRIVSAQLESYNPEAYMELREFLDTNSVSDGDKFCATLMRRSSRHMNLALRILEVRSAYCKNDFEWDNMKRLAFKNVDDSNTRLMREYVLETSHVETDSDK.

The transit peptide at 1–45 directs the protein to the chloroplast; that stretch reads MESSSSLLHHSYLSYLNPKFGKRPLVSYPLMQSSRKCKQTRICSN.

Belongs to the RbcX family. In terms of assembly, homodimer. Interacts with rbcL, atpB and THI1.

The protein resides in the plastid. The protein localises to the chloroplast. Its function is as follows. Chaperone involved in RuBisCO assembly process. This Arabidopsis thaliana (Mouse-ear cress) protein is Chaperonin-like RBCX protein 1, chloroplastic.